Consider the following 263-residue polypeptide: tRNA1(Val) (adenine(37)-N6)-methyltransferase (263 aa).

The protein belongs to the methyltransferase superfamily. tRNA (adenine-N(6)-)-methyltransferase family.

It is found in the cytoplasm. The catalysed reaction is adenosine(37) in tRNA1(Val) + S-adenosyl-L-methionine = N(6)-methyladenosine(37) in tRNA1(Val) + S-adenosyl-L-homocysteine + H(+). Functionally, specifically methylates the adenine in position 37 of tRNA(1)(Val) (anticodon cmo5UAC). The chain is tRNA1(Val) (adenine(37)-N6)-methyltransferase from Salmonella choleraesuis (strain SC-B67).